The primary structure comprises 37 residues: Large ribosomal subunit protein bL36c (37 aa).

The protein belongs to the bacterial ribosomal protein bL36 family.

It is found in the plastid. It localises to the chloroplast. This is Large ribosomal subunit protein bL36c (rpl36) from Nephroselmis olivacea (Green alga).